A 472-amino-acid polypeptide reads, in one-letter code: 2-amino-4-ketopentanoate thiolase beta subunit (472 aa).

An N6-(pyridoxal phosphate)lysine modification is found at lysine 102. Pyridoxal 5'-phosphate contacts are provided by residues asparagine 128 and 238-242 (AGGGN).

It belongs to the threonine synthase family. As to quaternary structure, heterodimer with OrtA. Pyridoxal 5'-phosphate is required as a cofactor.

The enzyme catalyses D-alanine + acetyl-CoA = (2R)-2-amino-4-oxopentanoate + CoA. Functionally, involved in the ornithine fermentation pathway. Catalyzes the thiolytic cleavage of 2-amino-4-ketopentanoate (AKP) with coenzyme A (CoA) to form acetyl-CoA and alanine. It is strictly specific for AKP. The protein is 2-amino-4-ketopentanoate thiolase beta subunit of Unknown prokaryotic organism.